Reading from the N-terminus, the 267-residue chain is Myb-related protein Hv1 (267 aa).

2 consecutive HTH myb-type domains span residues 9 to 61 (KAHT…INYL) and 62 to 116 (RPDL…RRKL). DNA-binding regions (H-T-H motif) lie at residues 37–61 (WRSL…INYL) and 89–112 (WSLI…NTHI).

In terms of tissue distribution, germinating seed and apical meristem of shoot and root.

The protein resides in the nucleus. Possible transcription activator in response to an external signal. May be involved in the regulation of flavonoid biosynthesis. The protein is Myb-related protein Hv1 (MYB1) of Hordeum vulgare (Barley).